A 268-amino-acid polypeptide reads, in one-letter code: MDRKYKDTSSEEEDSLNEDEMAWIPWYCNLKGNEFFATIDEDYINDDFNLTGLSSLVQFYDSALGIILDSDPDDPLSEDQQEALERSADILYGLIHARYILTPKGLAHMHEKFKKAEFGRCPRVFCQNQPVLPVGLADMQGVDTVKVYCPRCNDIFNPKYRRHSHIDGAYFGTTFPHLLLITYPELIPTKPPQQYIPKIYGFKIHKSARERQLQIQQKKNSLSNNNQNNQNNNINNNNNNNNNNNNNNNNNNNNQQNNNNQQNNNTNK.

Residues leucine 222–lysine 268 are disordered. Over residues asparagine 224–lysine 268 the composition is skewed to low complexity.

Belongs to the casein kinase 2 subunit beta family. In terms of assembly, casein kinase II/CK2 is a tetramer composed of two alpha subunit and two beta subunits.

Regulatory subunit of casein kinase II/CK2. As part of the kinase complex regulates the basal catalytic activity of the alpha subunit a constitutively active serine/threonine-protein kinase that phosphorylates a large number of substrates containing acidic residues C-terminal to the phosphorylated serine or threonine. The polypeptide is Casein kinase II subunit beta (csnk2b) (Dictyostelium discoideum (Social amoeba)).